The chain runs to 610 residues: Serine/threonine-protein kinase VRK1 (610 aa).

Residues 32 to 384 (FIVGKQFATG…PRKRTTRKAV (353 aa)) form the Protein kinase domain. ATP-binding positions include 38 to 46 (FATGGFGRI) and lysine 61. The Proton acceptor role is filled by aspartate 167. Disordered regions lie at residues 317–476 (IQKT…NKVA), 498–530 (ISVA…VGEG), 544–577 (KKAK…KGRR), and 590–610 (ERLA…SSEV). The segment covering 352 to 373 (AVKEESDNKDNDEVEVKPEKKA) has biased composition (basic and acidic residues). Over residues 388–397 (NDSDDNEEQY) the composition is skewed to acidic residues. Low complexity predominate over residues 447–458 (TTPSSAASTSRS). Residues 465–474 (LTSSTASSNK) show a composition bias toward polar residues. A compositionally biased stretch (low complexity) spans 502 to 517 (SDKSPTTSTPSSSSGL). 2 stretches are compositionally biased toward polar residues: residues 550–559 (SGISSATKAS) and 594–610 (SRQT…SSEV).

The protein belongs to the protein kinase superfamily. CK1 Ser/Thr protein kinase family. VRK subfamily. Post-translationally, autophosphorylates in vitro. In terms of tissue distribution, present in germ cells at all stages of progression from the mitotic zone to mature oocytes, but not in maturing spermatids (at the protein level). Expressed in the ventral nerve cord and vulva cells.

Its subcellular location is the nucleus. It localises to the cytoplasm. The protein resides in the cajal body. The enzyme catalyses L-seryl-[protein] + ATP = O-phospho-L-seryl-[protein] + ADP + H(+). It carries out the reaction L-threonyl-[protein] + ATP = O-phospho-L-threonyl-[protein] + ADP + H(+). Serine/threonine kinase that phosphorylates baf-1, thus regulating the association of baf-1 with chromatin and nuclear membrane proteins during nuclear envelope formation. May act through the egl-17 signaling pathway. Essential in hermaphrodites for formation of the vulva, uterus, and uterine seam cells and for development and maintenance of the somatic gonad and thus the germ line. Acts to prevent cep-1 from triggering an inappropriate cell cycle arrest, thereby promoting germ cell proliferation. Regulates anchor cell polarity and the timing of anchor cell invasion through the basement membranes separating vulval and somatic gonadal cells during the L3 larval stage. The polypeptide is Serine/threonine-protein kinase VRK1 (Caenorhabditis elegans).